The chain runs to 230 residues: Cytochrome c oxidase subunit 2 (230 aa).

Residues 1 to 14 (MAHPAQLGFQDAAS) lie on the Mitochondrial intermembrane side of the membrane. Residues 15–45 (PVMEELLCFHDHALMIVFLISTLVLYIIIAM) form a helical membrane-spanning segment. Topologically, residues 46–59 (VSTKLTNKFILDSQ) are mitochondrial matrix. A helical transmembrane segment spans residues 60–87 (EIEIVWTVLPAIILILIALPSLRILYLM). Topologically, residues 88 to 230 (DEINDPHVTI…NWSSAMLEDA (143 aa)) are mitochondrial intermembrane. His-161, Cys-196, Glu-198, Cys-200, His-204, and Met-207 together coordinate Cu cation. Glu-198 contributes to the Mg(2+) binding site.

It belongs to the cytochrome c oxidase subunit 2 family. As to quaternary structure, component of the cytochrome c oxidase (complex IV, CIV), a multisubunit enzyme composed of 14 subunits. The complex is composed of a catalytic core of 3 subunits MT-CO1, MT-CO2 and MT-CO3, encoded in the mitochondrial DNA, and 11 supernumerary subunits COX4I, COX5A, COX5B, COX6A, COX6B, COX6C, COX7A, COX7B, COX7C, COX8 and NDUFA4, which are encoded in the nuclear genome. The complex exists as a monomer or a dimer and forms supercomplexes (SCs) in the inner mitochondrial membrane with NADH-ubiquinone oxidoreductase (complex I, CI) and ubiquinol-cytochrome c oxidoreductase (cytochrome b-c1 complex, complex III, CIII), resulting in different assemblies (supercomplex SCI(1)III(2)IV(1) and megacomplex MCI(2)III(2)IV(2)). Found in a complex with TMEM177, COA6, COX18, COX20, SCO1 and SCO2. Interacts with TMEM177 in a COX20-dependent manner. Interacts with COX20. Interacts with COX16. Cu cation serves as cofactor.

Its subcellular location is the mitochondrion inner membrane. It catalyses the reaction 4 Fe(II)-[cytochrome c] + O2 + 8 H(+)(in) = 4 Fe(III)-[cytochrome c] + 2 H2O + 4 H(+)(out). Functionally, component of the cytochrome c oxidase, the last enzyme in the mitochondrial electron transport chain which drives oxidative phosphorylation. The respiratory chain contains 3 multisubunit complexes succinate dehydrogenase (complex II, CII), ubiquinol-cytochrome c oxidoreductase (cytochrome b-c1 complex, complex III, CIII) and cytochrome c oxidase (complex IV, CIV), that cooperate to transfer electrons derived from NADH and succinate to molecular oxygen, creating an electrochemical gradient over the inner membrane that drives transmembrane transport and the ATP synthase. Cytochrome c oxidase is the component of the respiratory chain that catalyzes the reduction of oxygen to water. Electrons originating from reduced cytochrome c in the intermembrane space (IMS) are transferred via the dinuclear copper A center (CU(A)) of subunit 2 and heme A of subunit 1 to the active site in subunit 1, a binuclear center (BNC) formed by heme A3 and copper B (CU(B)). The BNC reduces molecular oxygen to 2 water molecules using 4 electrons from cytochrome c in the IMS and 4 protons from the mitochondrial matrix. The sequence is that of Cytochrome c oxidase subunit 2 (mt-co2) from Danio rerio (Zebrafish).